Here is a 187-residue protein sequence, read N- to C-terminus: Elongation factor P (187 aa).

It belongs to the elongation factor P family.

It localises to the cytoplasm. The protein operates within protein biosynthesis; polypeptide chain elongation. Involved in peptide bond synthesis. Stimulates efficient translation and peptide-bond synthesis on native or reconstituted 70S ribosomes in vitro. Probably functions indirectly by altering the affinity of the ribosome for aminoacyl-tRNA, thus increasing their reactivity as acceptors for peptidyl transferase. This is Elongation factor P from Mycobacterium sp. (strain JLS).